The primary structure comprises 576 residues: NADH-ubiquinone oxidoreductase chain 5 (576 aa).

A run of 16 helical transmembrane segments spans residues 6–26 (ISFY…LKFL), 46–66 (IVMT…VLLI), 88–108 (ILLV…PNLI), 109–129 (SILL…IYFQ), 149–169 (VALL…YIFY), 179–199 (MMII…QIPF), 211–231 (TPVS…YLLI), 240–260 (WWMG…AGLG), 270–289 (IIAL…LSMG), 294–316 (AFFH…GSII), 339–359 (CSCF…AGFY), 363–383 (LILE…LFFF), 423–443 (IFFL…LMFL), 459–479 (LFVC…SLFF), 492–512 (FAGS…NYPL), and 556–576 (IYLL…VLVN).

It belongs to the complex I subunit 5 family.

It localises to the mitochondrion inner membrane. The catalysed reaction is a ubiquinone + NADH + 5 H(+)(in) = a ubiquinol + NAD(+) + 4 H(+)(out). Functionally, core subunit of the mitochondrial membrane respiratory chain NADH dehydrogenase (Complex I) that is believed to belong to the minimal assembly required for catalysis. Complex I functions in the transfer of electrons from NADH to the respiratory chain. The immediate electron acceptor for the enzyme is believed to be ubiquinone. This is NADH-ubiquinone oxidoreductase chain 5 (ND5) from Anopheles quadrimaculatus (Common malaria mosquito).